We begin with the raw amino-acid sequence, 289 residues long: Acetyl-coenzyme A carboxylase carboxyl transferase subunit beta 2 (289 aa).

Residues 25-289 form the CoA carboxyltransferase N-terminal domain; the sequence is VWTKCPSCDQ…TNTSIRLEVK (265 aa). Residues cysteine 29, cysteine 32, cysteine 48, and cysteine 51 each coordinate Zn(2+). The C4-type zinc-finger motif lies at 29 to 51; that stretch reads CPSCDQVLYRIALKENLEVCPKC.

Belongs to the AccD/PCCB family. In terms of assembly, acetyl-CoA carboxylase is a heterohexamer composed of biotin carboxyl carrier protein (AccB), biotin carboxylase (AccC) and two subunits each of ACCase subunit alpha (AccA) and ACCase subunit beta (AccD). It depends on Zn(2+) as a cofactor.

It is found in the cytoplasm. The catalysed reaction is N(6)-carboxybiotinyl-L-lysyl-[protein] + acetyl-CoA = N(6)-biotinyl-L-lysyl-[protein] + malonyl-CoA. Its pathway is lipid metabolism; malonyl-CoA biosynthesis; malonyl-CoA from acetyl-CoA: step 1/1. Component of the acetyl coenzyme A carboxylase (ACC) complex. Biotin carboxylase (BC) catalyzes the carboxylation of biotin on its carrier protein (BCCP) and then the CO(2) group is transferred by the transcarboxylase to acetyl-CoA to form malonyl-CoA. In Vibrio parahaemolyticus serotype O3:K6 (strain RIMD 2210633), this protein is Acetyl-coenzyme A carboxylase carboxyl transferase subunit beta 2.